Consider the following 272-residue polypeptide: Endoplasmic reticulum resident protein 27 (272 aa).

Positions 1-25 (MEAMPSRCLFLLFLSTCKLSPEVVA) are cleaved as a signal peptide. One can recognise a Thioredoxin domain in the interval 38–151 (EPMRLTDVQA…LVTEYNAITA (114 aa)). Asn99 carries N-linked (GlcNAc...) asparagine glycosylation. A PDIA3-binding site region spans residues 229–232 (DKWD). The Prevents secretion from ER motif lies at 269–272 (KVEL).

This sequence belongs to the protein disulfide isomerase family. As to quaternary structure, interacts with PDIA3.

It is found in the endoplasmic reticulum lumen. In terms of biological role, specifically binds unfolded proteins and may recruit protein disulfide isomerase PDIA3 to unfolded substrates. Binds protein substrates via a hydrophobic pocket in the C-terminal domain. May play a role in the unfolded stress response. In Bos taurus (Bovine), this protein is Endoplasmic reticulum resident protein 27 (ERP27).